The chain runs to 238 residues: Single-stranded DNA-binding protein WHY2, mitochondrial (238 aa).

A mitochondrion-targeting transit peptide spans 1-29 (MMKQARSLLSRSLCDQSKSLFEASTLRGF). Positions 62–67 (KGKAAL) are required for ssDNA binding.

The protein belongs to the Whirly family. Homotetramer.

Its subcellular location is the mitochondrion. Functionally, single-stranded DNA-binding protein that associates with mitochondrial DNA and may play a role in the regulation of the gene expression machinery. Also seems to be required to prevent break-induced DNA rearrangements in the mitochondrial genome. Can bind to melt double-stranded DNA in vivo. The chain is Single-stranded DNA-binding protein WHY2, mitochondrial (WHY2) from Arabidopsis thaliana (Mouse-ear cress).